Consider the following 433-residue polypeptide: tRNA(Ile)-lysidine synthase (433 aa).

27–32 contributes to the ATP binding site; the sequence is SGGLDS.

It belongs to the tRNA(Ile)-lysidine synthase family.

The protein resides in the cytoplasm. The catalysed reaction is cytidine(34) in tRNA(Ile2) + L-lysine + ATP = lysidine(34) in tRNA(Ile2) + AMP + diphosphate + H(+). Its function is as follows. Ligates lysine onto the cytidine present at position 34 of the AUA codon-specific tRNA(Ile) that contains the anticodon CAU, in an ATP-dependent manner. Cytidine is converted to lysidine, thus changing the amino acid specificity of the tRNA from methionine to isoleucine. This chain is tRNA(Ile)-lysidine synthase, found in Legionella pneumophila subsp. pneumophila (strain Philadelphia 1 / ATCC 33152 / DSM 7513).